The sequence spans 287 residues: 4-hydroxybenzoate octaprenyltransferase (287 aa).

Transmembrane regions (helical) follow at residues 30 to 50 (ALWI…FTVG), 89 to 109 (WEAV…ILPL), 133 to 153 (FFAI…PMAF), 158 to 178 (GHVP…SVAY), 199 to 221 (ALTF…LGIY), and 267 to 287 (NNWL…AGSF).

The protein belongs to the UbiA prenyltransferase family. The cofactor is Mg(2+).

It localises to the cell inner membrane. The catalysed reaction is all-trans-octaprenyl diphosphate + 4-hydroxybenzoate = 4-hydroxy-3-(all-trans-octaprenyl)benzoate + diphosphate. It functions in the pathway cofactor biosynthesis; ubiquinone biosynthesis. In terms of biological role, catalyzes the prenylation of para-hydroxybenzoate (PHB) with an all-trans polyprenyl group. Mediates the second step in the final reaction sequence of ubiquinone-8 (UQ-8) biosynthesis, which is the condensation of the polyisoprenoid side chain with PHB, generating the first membrane-bound Q intermediate 3-octaprenyl-4-hydroxybenzoate. The chain is 4-hydroxybenzoate octaprenyltransferase from Paraburkholderia phytofirmans (strain DSM 17436 / LMG 22146 / PsJN) (Burkholderia phytofirmans).